The primary structure comprises 506 residues: Bone morphogenetic protein 6 (506 aa).

A signal peptide spans methionine 1–serine 20. The propeptide occupies cysteine 21–arginine 367. 3 disordered regions span residues alanine 44–leucine 64, proline 87–serine 125, and lysine 139–serine 195. Residues leucine 96–glutamine 112 are compositionally biased toward low complexity. Acidic residues predominate over residues aspartate 140–glutamate 153. Residues asparagine 234, asparagine 262, asparagine 379, asparagine 397, and asparagine 447 are each glycosylated (N-linked (GlcNAc...) asparagine). Residues threonine 366–asparagine 397 are disordered. Polar residues predominate over residues aspartate 386–asparagine 397. 3 disulfide bridges follow: cysteine 405–cysteine 471, cysteine 434–cysteine 503, and cysteine 438–cysteine 505.

The protein belongs to the TGF-beta family. In terms of assembly, interacts with SOSTDC1. Interacts (when glycosylated) with type I receptor ACVR1; the interaction may induce HAMP expression. Interacts with type II receptor ACVR2B. Interacts with Hemojuvelin/HJV. Interacts with ERFE; the interaction inhibits BMP-induced transcription of HAMP. Interacts with BMPR1A/ALK3. Forms heterodimers with BMP2 in vitro; the heterodimer then binds to its receptor BMPR1A /ALK3 and may induce HAMP expression.

The protein localises to the secreted. Growth factor of the TGF-beta superfamily that plays essential roles in many developmental processes including cartilage and bone formation. Also plays an important role in the regulation of HAMP/hepcidin expression and iron metabolism by acting as a ligand for hemojuvelin/HJV. Also acts to promote expression of HAMP, potentially via the interaction with its receptor BMPR1A/ALK3. Initiates the canonical BMP signaling cascade by associating with type I receptor ACVR1 and type II receptor ACVR2B. In turn, ACVR1 propagates signal by phosphorylating SMAD1/5/8 that travel to the nucleus and act as activators and repressors of transcription of target. Can also signal through non-canonical pathway such as TAZ-Hippo signaling cascade to modulate VEGF signaling by regulating VEGFR2 expression. The sequence is that of Bone morphogenetic protein 6 (Bmp6) from Rattus norvegicus (Rat).